The sequence spans 48 residues: MARFPEAEARLLNVKICMKCNARNAIRATSCRKCGSDELRAKSKERKA.

Belongs to the eukaryotic ribosomal protein eL40 family.

This Methanoculleus marisnigri (strain ATCC 35101 / DSM 1498 / JR1) protein is Large ribosomal subunit protein eL40.